The primary structure comprises 203 residues: Chromophore lyase CpcT/CpeT 3 (203 aa).

It belongs to the CpcT/CpeT biliprotein lyase family.

Its function is as follows. Covalently attaches a chromophore to Cys residue(s) of phycobiliproteins. The sequence is that of Chromophore lyase CpcT/CpeT 3 from Gloeobacter violaceus (strain ATCC 29082 / PCC 7421).